Consider the following 273-residue polypeptide: Type II iodothyronine deiodinase (273 aa).

The Lumenal segment spans residues 1 to 9 (MGILSVDLL). A helical; Signal-anchor for type III membrane protein membrane pass occupies residues 10 to 34 (ITLQILPVFFSNCLFLALYDSVILL). Residues 35-273 (KHVVLLLSRS…KRUKKTRLAG (239 aa)) lie on the Cytoplasmic side of the membrane. U133 is a catalytic residue. 2 non-standard amino acids (selenocysteine) are found at residues U133 and U266.

It belongs to the iodothyronine deiodinase family. As to quaternary structure, predominantly monomer. Can form homodimers but homodimerization is not essential for enzyme activity. Interacts with USP20 and USP33. Interacts with MARCHF6. In terms of processing, ubiquitinated by MARCHF6, leading to its degradation by the proteasome. Deubiquitinated by USP20 and USP33. In terms of tissue distribution, isoform 1 is expressed in the lung, trachea, kidney, heart, skeletal muscle, placenta, fetal brain and several regions of the adult brain. Isoform 2 is expressed in the brain, heart, kidney and trachea.

It localises to the endoplasmic reticulum membrane. The catalysed reaction is 3,3',5-triiodo-L-thyronine + iodide + A + H(+) = L-thyroxine + AH2. It carries out the reaction 3,3'-diiodo-L-thyronine + iodide + A + H(+) = 3,3',5'-triiodo-L-thyronine + AH2. It catalyses the reaction 3'-iodo-L-thyronine + iodide + A + H(+) = 3',5'-diiodo-L-thyronine + AH2. The enzyme catalyses 3,3'-diiodothyronamine + iodide + A + H(+) = 3,3',5'-triiodothyronamine + AH2. The catalysed reaction is 3'-iodothyronamine + iodide + A + H(+) = 3',5'-diiodothyronamine + AH2. In terms of biological role, plays a crucial role in the metabolism of thyroid hormones (TH) and has specific roles in TH activation and inactivation by deiodination. Catalyzes the deiodination of L-thyroxine (T4) to 3,5,3'-triiodothyronine (T3), 3,3',5'-triiodothyronine (rT3) to 3,3'-diiodothyronine (3,3'-T2) and 3',5'-diiodothyronine (3',5'-T2) to 3'-monoiodothyronine (3'-T1) via outer-ring deiodination (ORD). Catalyzes the phenolic ring deiodinations of 3,3',5'-triiodothyronamine and 3',5'- diiodothyronamine. In Homo sapiens (Human), this protein is Type II iodothyronine deiodinase (DIO2).